Reading from the N-terminus, the 183-residue chain is MSVVVGGVEYSLNNWAKYEIKRRAAELESVNYYPHCEYVMPEDIVVSILGSKPNCPFLEALKRFHDFLKKRRIIFKGEYLVIPWMGAQDVADMIHHVENRINLDHLEDLAHMLKLITYHRSFDTCINQSFEHLYAFKFPDANIETHELKHIRQLEKKMYGYILRLEKLQTVLTFYIEFLLKQV.

It belongs to the asfivirus S183L family.

This is an uncharacterized protein from Ornithodoros (relapsing fever ticks).